Reading from the N-terminus, the 74-residue chain is Sec-independent protein translocase protein TatA (74 aa).

Residues 1-21 form a helical membrane-spanning segment; the sequence is MGSMSWIHWVIVLGIVALLFG. The segment at 51 to 74 is disordered; that stretch reads EVADNKAKSALPRTEAEAEELRKS. Positions 64–74 are enriched in basic and acidic residues; the sequence is TEAEAEELRKS.

This sequence belongs to the TatA/E family. The Tat system comprises two distinct complexes: a TatABC complex, containing multiple copies of TatA, TatB and TatC subunits, and a separate TatA complex, containing only TatA subunits. Substrates initially bind to the TatABC complex, which probably triggers association of the separate TatA complex to form the active translocon.

Its subcellular location is the cell inner membrane. Part of the twin-arginine translocation (Tat) system that transports large folded proteins containing a characteristic twin-arginine motif in their signal peptide across membranes. TatA could form the protein-conducting channel of the Tat system. In Caulobacter vibrioides (strain ATCC 19089 / CIP 103742 / CB 15) (Caulobacter crescentus), this protein is Sec-independent protein translocase protein TatA.